A 194-amino-acid polypeptide reads, in one-letter code: MTGLEIWLLAIGLAMDCLAVSIASGIILRRIQWRPMLIMAFFFGLFQAIMPLLGWLGASTFSHLIESVDHWIAFAILAFLGGRMIKESFKEEDCCQRFNPASLKVVITMAVATSIDALAVGVSFAFLGIKSCSSILYPAGIIGFVSFFMSLIGLIFGIRFGCGIARKLRAELWGGIILILIGTKILIEHLFFNN.

The next 6 helical transmembrane spans lie at 8-28, 36-56, 61-81, 109-129, 138-158, and 172-192; these read LLAI…GIIL, MLIM…LGWL, FSHL…AFLG, MAVA…FLGI, PAGI…IFGI, and LWGG…HLFF.

This sequence belongs to the MntP (TC 9.B.29) family.

The protein localises to the cell inner membrane. Functionally, probably functions as a manganese efflux pump. The sequence is that of Putative manganese efflux pump MntP from Bacteroides fragilis (strain ATCC 25285 / DSM 2151 / CCUG 4856 / JCM 11019 / LMG 10263 / NCTC 9343 / Onslow / VPI 2553 / EN-2).